Here is a 219-residue protein sequence, read N- to C-terminus: UPF0502 protein Gmet_0262 (219 aa).

The protein belongs to the UPF0502 family.

The sequence is that of UPF0502 protein Gmet_0262 from Geobacter metallireducens (strain ATCC 53774 / DSM 7210 / GS-15).